Reading from the N-terminus, the 110-residue chain is MKLKKKFLEKSKKVAEERINILMNLAEKESNSGKTERSKNYVLLGKKIAMRMRMPYPKEWKRRICKNCGSFLIYGKNARVRTKAKNYPHVVITCLECNSITRIPIKTAKK.

Positions 65, 68, 94, and 97 each coordinate Zn(2+).

Belongs to the eukaryotic/archaeal RNase P protein component 4 family. In terms of assembly, consists of a catalytic RNA component and at least 5 protein subunits. Zn(2+) is required as a cofactor.

Its subcellular location is the cytoplasm. It catalyses the reaction Endonucleolytic cleavage of RNA, removing 5'-extranucleotides from tRNA precursor.. Functionally, part of ribonuclease P, a protein complex that generates mature tRNA molecules by cleaving their 5'-ends. The chain is Ribonuclease P protein component 4 from Methanococcus maripaludis (strain DSM 14266 / JCM 13030 / NBRC 101832 / S2 / LL).